The sequence spans 79 residues: Small ribosomal subunit protein bS18 (79 aa).

This sequence belongs to the bacterial ribosomal protein bS18 family. In terms of assembly, part of the 30S ribosomal subunit. Forms a tight heterodimer with protein bS6.

Its function is as follows. Binds as a heterodimer with protein bS6 to the central domain of the 16S rRNA, where it helps stabilize the platform of the 30S subunit. This Streptococcus pyogenes serotype M49 (strain NZ131) protein is Small ribosomal subunit protein bS18.